A 118-amino-acid chain; its full sequence is Protein BEX4 (118 aa).

The interval 14-50 (VEKDKKDKKGGKASKQSEEEPHHLEEVENKKPGGNVR) is disordered. The span at 28–44 (KQSEEEPHHLEEVENKK) shows a compositional bias: basic and acidic residues. Positions 30–88 (SEEEPHHLEEVENKKPGGNVRRKVRRLVPNFLWAIPNRHVDRNEGGEDVGRFVVQGTEV) are interaction with SIRT2. Residues 30-118 (SEEEPHHLEE…DNHYDFCLIP (89 aa)) form an interaction with alpha-tubulin region. A Zn(2+)-binding site is contributed by Cys115.

It belongs to the BEX family. In terms of assembly, interacts with alpha-tubulin. Interacts with SIRT2. Post-translationally, ubiquitinated and degraded by the proteasome. Expressed in both Sertoli and germ cells as well as interstitial area of the testis (at protein level).

The protein localises to the cytoplasm. It is found in the cytoskeleton. The protein resides in the spindle pole. Its subcellular location is the nucleus. In terms of biological role, may play a role in microtubule deacetylation by negatively regulating the SIRT2 deacetylase activity toward alpha-tubulin and thereby participate in the control of cell cycle progression and genomic stability. In absence of reductive stress, acts as a pseudosubstrate for the CRL2(FEM1B) complex: associates with FEM1B via zinc, thereby preventing association between FEM1B and its substrates. The sequence is that of Protein BEX4 from Mus musculus (Mouse).